A 2328-amino-acid polypeptide reads, in one-letter code: Reducing polyketide synthase Preu2 (2328 aa).

In terms of domain architecture, Ketosynthase family 3 (KS3) spans 1–259; sequence MMAVHLAVAS…GSNVHVIVES (259 aa). Residues 376-696 form a malonyl-CoA:ACP transacylase (MAT) domain region; the sequence is IFTGQGAQWP…SGLLKRSSNS (321 aa). An N-terminal hotdog fold region spans residues 766-899; that stretch reads NELLGEELSM…GSLTVQFGDD (134 aa). Residues 766–1057 form a dehydratase (DH) domain region; that stretch reads NELLGEELSM…FCTAPFRMST (292 aa). A PKS/mFAS DH domain is found at 766–1059; that stretch reads NELLGEELSM…TAPFRMSTPE (294 aa). The active-site Proton acceptor; for dehydratase activity is the His-798. The tract at residues 914–1059 is C-terminal hotdog fold; that stretch reads LTELDLDTFY…TAPFRMSTPE (146 aa). Asp-969 functions as the Proton donor; for dehydratase activity in the catalytic mechanism. The tract at residues 1198 to 1419 is methyltransferase (MT) domain; the sequence is DGMLTQLYSE…VDERVVSLRD (222 aa). The segment at 1932-2111 is ketoreductase (KR)domain; sequence CYIIIGTSDL…AASVVHLGHV (180 aa). One can recognise a Carrier domain in the interval 2231–2309; sequence SSSHDIIRNG…NIVDFAVAHL (79 aa). Residue Ser-2269 is modified to O-(pantetheine 4'-phosphoryl)serine.

It depends on pantetheine 4'-phosphate as a cofactor.

Its function is as follows. Reducing polyketide synthase; part of a gene cluster that mediates the biosynthesis of a yet unidentified natural product. This is Reducing polyketide synthase Preu2 from Preussia isomera (Coprophilous fungus).